A 127-amino-acid chain; its full sequence is Fluoride-specific ion channel FluC (127 aa).

Helical transmembrane passes span 7–27 (LILI…MGLI), 37–57 (FGTL…MAMI), 69–89 (LFMI…SAEV), and 102–122 (LGIM…GVLI). Positions 77 and 80 each coordinate Na(+).

This sequence belongs to the fluoride channel Fluc/FEX (TC 1.A.43) family.

The protein localises to the cell inner membrane. It carries out the reaction fluoride(in) = fluoride(out). Na(+) is not transported, but it plays an essential structural role and its presence is essential for fluoride channel function. Functionally, fluoride-specific ion channel. Important for reducing fluoride concentration in the cell, thus reducing its toxicity. The sequence is that of Fluoride-specific ion channel FluC from Mannheimia succiniciproducens (strain KCTC 0769BP / MBEL55E).